Consider the following 210-residue polypeptide: MKLPQAFYARDTRTVARALLGKVLVHLDGGVRRAARIVETEAYHGPDDRASHARAGPTPRAAIMFGPPGRAYVYLIYGTSHCMNVVTGPEGFPSAVLLRAAEPIDGCLHSTRGPGNLCRALAIRREHDNGRDLAGDDLFVEDAPPPSEAVVTGPRVNVGYAGAWAARPWRFALRGSPWVSRPPPGAAAARAARAPAAPAPRPRRPRGSGP.

Positions 180-210 are disordered; it reads SRPPPGAAAARAARAPAAPAPRPRRPRGSGP. The span at 186–196 shows a compositional bias: low complexity; the sequence is AAAARAARAPA. The segment covering 201–210 has biased composition (basic residues); sequence RPRRPRGSGP.

It belongs to the DNA glycosylase MPG family.

The protein is Putative 3-methyladenine DNA glycosylase of Anaeromyxobacter dehalogenans (strain 2CP-1 / ATCC BAA-258).